The chain runs to 275 residues: 3-methyl-2-oxobutanoate hydroxymethyltransferase (275 aa).

Mg(2+) is bound by residues D49 and D88. Residues 49-50 (DS), D88, and K118 each bind 3-methyl-2-oxobutanoate. E120 lines the Mg(2+) pocket. The active-site Proton acceptor is the E187.

The protein belongs to the PanB family. In terms of assembly, homodecamer; pentamer of dimers. Mg(2+) serves as cofactor.

The protein resides in the cytoplasm. The enzyme catalyses 3-methyl-2-oxobutanoate + (6R)-5,10-methylene-5,6,7,8-tetrahydrofolate + H2O = 2-dehydropantoate + (6S)-5,6,7,8-tetrahydrofolate. It functions in the pathway cofactor biosynthesis; (R)-pantothenate biosynthesis; (R)-pantoate from 3-methyl-2-oxobutanoate: step 1/2. Functionally, catalyzes the reversible reaction in which hydroxymethyl group from 5,10-methylenetetrahydrofolate is transferred onto alpha-ketoisovalerate to form ketopantoate. This is 3-methyl-2-oxobutanoate hydroxymethyltransferase from Nitrobacter hamburgensis (strain DSM 10229 / NCIMB 13809 / X14).